A 467-amino-acid chain; its full sequence is Ethanolamine ammonia-lyase reactivase EutA (467 aa).

The protein belongs to the EutA family.

The protein localises to the bacterial microcompartment. The protein operates within amine and polyamine degradation; ethanolamine degradation. In terms of biological role, reactivates suicidally inhibited ethanolamine ammonia-lyase (EAL), cyanocobalamin-inactivated EAL and O(2)-inactivated EAL; requires Mg(2+), ATP and adenosylcobalamin. Reactivation probably occurs by the ATP-dependent exchange of cobalamin. Protects EAL from inhibition by CN-B12, does not have adenosylation activity. Functionally, expression of the eut operon allows this bacteria to use ethanolamine as a carbon, nitrogen and energy source. It relies on cobalamin (vitamin B12) both as a cofactor for the ethanolamine ammonia-lyase (EAL) activity and to induce the operon. EA enhances bacterial survival in macrophages in a concentration-dependent manner, suggesting it is an important nutrient during infection. The sequence is that of Ethanolamine ammonia-lyase reactivase EutA from Salmonella typhimurium (strain LT2 / SGSC1412 / ATCC 700720).